We begin with the raw amino-acid sequence, 256 residues long: Glutamate racemase (256 aa).

Substrate is bound by residues 11-12 (DS) and 43-44 (YG). Cys-74 (proton donor/acceptor) is an active-site residue. 75-76 (NT) is a binding site for substrate. The Proton donor/acceptor role is filled by Cys-182. Residue 183 to 184 (TH) participates in substrate binding.

It belongs to the aspartate/glutamate racemases family.

It carries out the reaction L-glutamate = D-glutamate. Its pathway is cell wall biogenesis; peptidoglycan biosynthesis. Provides the (R)-glutamate required for cell wall biosynthesis. The chain is Glutamate racemase from Leptospira interrogans serogroup Icterohaemorrhagiae serovar Lai (strain 56601).